A 272-amino-acid polypeptide reads, in one-letter code: 3-methyl-2-oxobutanoate hydroxymethyltransferase (272 aa).

Mg(2+) is bound by residues D43 and D82. 3-methyl-2-oxobutanoate-binding positions include 43–44, D82, and K112; that span reads DS. E114 serves as a coordination point for Mg(2+). The active-site Proton acceptor is the E179.

This sequence belongs to the PanB family. As to quaternary structure, homodecamer; pentamer of dimers. Mg(2+) is required as a cofactor.

It localises to the cytoplasm. It catalyses the reaction 3-methyl-2-oxobutanoate + (6R)-5,10-methylene-5,6,7,8-tetrahydrofolate + H2O = 2-dehydropantoate + (6S)-5,6,7,8-tetrahydrofolate. Its pathway is cofactor biosynthesis; (R)-pantothenate biosynthesis; (R)-pantoate from 3-methyl-2-oxobutanoate: step 1/2. Catalyzes the reversible reaction in which hydroxymethyl group from 5,10-methylenetetrahydrofolate is transferred onto alpha-ketoisovalerate to form ketopantoate. The polypeptide is 3-methyl-2-oxobutanoate hydroxymethyltransferase (Staphylococcus aureus (strain JH1)).